The chain runs to 287 residues: uncharacterized protein (287 aa).

GTP-binding positions include Gly43 to Ser50, Asp90 to Gly93, and Asp156 to Glu159. In terms of domain architecture, G spans Gly48–Ile140.

It to E.coli YkfA and YeeP.

This is an uncharacterized protein from Escherichia coli (strain K12).